Reading from the N-terminus, the 85-residue chain is Putative plasmid stability protein y4jJ (85 aa).

Residues 66 to 78 (EAEHFNQLRDKTP) are compositionally biased toward basic and acidic residues. Residues 66 to 85 (EAEHFNQLRDKTPAEPMSFE) form a disordered region.

To P.syringae pv tomato plasmid stability protein StbC.

Involved in plasmid stability. This is Putative plasmid stability protein y4jJ from Sinorhizobium fredii (strain NBRC 101917 / NGR234).